Consider the following 227-residue polypeptide: 6-phosphogluconolactonase (227 aa).

It belongs to the glucosamine/galactosamine-6-phosphate isomerase family. 6-phosphogluconolactonase subfamily.

The enzyme catalyses 6-phospho-D-glucono-1,5-lactone + H2O = 6-phospho-D-gluconate + H(+). The protein operates within carbohydrate degradation; pentose phosphate pathway; D-ribulose 5-phosphate from D-glucose 6-phosphate (oxidative stage): step 2/3. Functionally, hydrolysis of 6-phosphogluconolactone to 6-phosphogluconate. The chain is 6-phosphogluconolactonase (pgl) from Helicobacter pylori (strain J99 / ATCC 700824) (Campylobacter pylori J99).